Reading from the N-terminus, the 263-residue chain is Aminoglycoside 3'-phosphotransferase (263 aa).

The active-site Proton acceptor is the aspartate 189.

It belongs to the aminoglycoside phosphotransferase family.

It catalyses the reaction kanamycin A + ATP = kanamycin 3'-phosphate + ADP + H(+). Its function is as follows. Resistance to kanamycin and structurally-related aminoglycosides, including amikacin. The polypeptide is Aminoglycoside 3'-phosphotransferase (aphA) (Staphylococcus aureus).